Here is a 148-residue protein sequence, read N- to C-terminus: Deoxyuridine 5'-triphosphate nucleotidohydrolase (148 aa).

Substrate contacts are provided by residues 67–69, N80, 84–86, and M94; these read RSG and LID.

It belongs to the dUTPase family. Mg(2+) serves as cofactor.

The enzyme catalyses dUTP + H2O = dUMP + diphosphate + H(+). Its pathway is pyrimidine metabolism; dUMP biosynthesis; dUMP from dCTP (dUTP route): step 2/2. In terms of biological role, this enzyme is involved in nucleotide metabolism: it produces dUMP, the immediate precursor of thymidine nucleotides and it decreases the intracellular concentration of dUTP so that uracil cannot be incorporated into DNA. The polypeptide is Deoxyuridine 5'-triphosphate nucleotidohydrolase (Paraburkholderia phymatum (strain DSM 17167 / CIP 108236 / LMG 21445 / STM815) (Burkholderia phymatum)).